The chain runs to 140 residues: Large-conductance mechanosensitive channel 3 (140 aa).

3 helical membrane-spanning segments follow: residues 8–28, 30–50, and 81–101; these read FISK…AAFG, IVTS…FGGL, and GSFI…FLMV.

The protein belongs to the MscL family. As to quaternary structure, homopentamer.

The protein resides in the cell inner membrane. Its function is as follows. Channel that opens in response to stretch forces in the membrane lipid bilayer. May participate in the regulation of osmotic pressure changes within the cell. The sequence is that of Large-conductance mechanosensitive channel 3 from Mesorhizobium japonicum (strain LMG 29417 / CECT 9101 / MAFF 303099) (Mesorhizobium loti (strain MAFF 303099)).